The chain runs to 47 residues: Protein YpaB (47 aa).

In Escherichia coli (strain K12), this protein is Protein YpaB (ypaB).